An 80-amino-acid polypeptide reads, in one-letter code: Exodeoxyribonuclease 7 small subunit (80 aa).

It belongs to the XseB family. As to quaternary structure, heterooligomer composed of large and small subunits.

The protein localises to the cytoplasm. The enzyme catalyses Exonucleolytic cleavage in either 5'- to 3'- or 3'- to 5'-direction to yield nucleoside 5'-phosphates.. Bidirectionally degrades single-stranded DNA into large acid-insoluble oligonucleotides, which are then degraded further into small acid-soluble oligonucleotides. The sequence is that of Exodeoxyribonuclease 7 small subunit from Rickettsia conorii (strain ATCC VR-613 / Malish 7).